A 423-amino-acid polypeptide reads, in one-letter code: UDP-N-acetylglucosamine 1-carboxyvinyltransferase (423 aa).

Phosphoenolpyruvate is bound at residue 22-23 (KN). R93 contributes to the UDP-N-acetyl-alpha-D-glucosamine binding site. Catalysis depends on C117, which acts as the Proton donor. C117 carries the post-translational modification 2-(S-cysteinyl)pyruvic acid O-phosphothioketal. Residues 122 to 126 (RPIDL), D307, and V329 contribute to the UDP-N-acetyl-alpha-D-glucosamine site.

This sequence belongs to the EPSP synthase family. MurA subfamily.

The protein resides in the cytoplasm. It catalyses the reaction phosphoenolpyruvate + UDP-N-acetyl-alpha-D-glucosamine = UDP-N-acetyl-3-O-(1-carboxyvinyl)-alpha-D-glucosamine + phosphate. Its pathway is cell wall biogenesis; peptidoglycan biosynthesis. Its function is as follows. Cell wall formation. Adds enolpyruvyl to UDP-N-acetylglucosamine. The chain is UDP-N-acetylglucosamine 1-carboxyvinyltransferase from Chlorobium chlorochromatii (strain CaD3).